We begin with the raw amino-acid sequence, 746 residues long: EF-hand domain-containing family member C2 (746 aa).

DM10 domains lie at 75-182 (DKQV…RKMG), 226-367 (DGHV…RTKY), and 429-536 (ESNT…EKHA). Positions 557–592 (PRSREIRQVFAAADPQHTKVIEYDPFRNLIVSITDG) constitute an EF-hand domain.

It localises to the cytoplasm. The protein resides in the cytoskeleton. The protein localises to the cilium axoneme. Functionally, microtubule inner protein (MIP) part of the dynein-decorated doublet microtubules (DMTs) in cilia axoneme, which is required for motile cilia beating. In Gallus gallus (Chicken), this protein is EF-hand domain-containing family member C2 (EFHC2).